The primary structure comprises 304 residues: Flagellin (304 aa).

It belongs to the bacterial flagellin family. As to quaternary structure, interacts with FliW in a 1:1 complex. Forms a 3-way complex of Hag, FliS and FliW, in which Flis and FliW do not directly interact.

It localises to the secreted. It is found in the bacterial flagellum. Its subcellular location is the cell wall. Its function is as follows. Flagellin is the subunit which polymerizes to form the filaments of bacterial flagella. Assembly into flagella requires FliW. Acts as a homeostatic autoinhibitory regulator to control its own cytoplasmic levels. Partner switching by flagellin between FliW and CsrA provides a flagellar assembly checkpoint to tightly control the timing of flagellin synthesis. Flagellin binds to assembly factor FliW, freeing translation regulator CsrA to repress translation of the flagellin mRNA. When the flagellar hook is assembled flagellin is secreted, depleting intracellular flagellin, which frees FliW to interact with CsrA. This derepresses flagellin translation and provides protein for flagellar assembly. Once the flagellar filament is completed cytoplasmic flagellin levels rise and CsrA translation repression of flagellin reinitiates. The polypeptide is Flagellin (Bacillus subtilis (strain 168)).